Reading from the N-terminus, the 346-residue chain is Cell division protein FtsZ 2 (346 aa).

Residues 23-27 (GGGGN), 110-112 (GTG), E141, R145, and D189 each bind GTP. Positions 320–346 (SNRSAQPTAPEAMNGQTAAAVPSRTLQ) are disordered.

This sequence belongs to the FtsZ family. As to quaternary structure, homodimer. Polymerizes to form a dynamic ring structure in a strictly GTP-dependent manner. Interacts directly with several other division proteins.

The protein resides in the cytoplasm. Its function is as follows. Essential cell division protein that forms a contractile ring structure (Z ring) at the future cell division site. The regulation of the ring assembly controls the timing and the location of cell division. One of the functions of the FtsZ ring is to recruit other cell division proteins to the septum to produce a new cell wall between the dividing cells. Binds GTP and shows GTPase activity. This is Cell division protein FtsZ 2 from Rhizobium meliloti (strain 1021) (Ensifer meliloti).